We begin with the raw amino-acid sequence, 762 residues long: 5-methyltetrahydropteroyltriglutamate--homocysteine methyltransferase (762 aa).

Residues 18-21 (REWK) and Lys112 each bind 5-methyltetrahydropteroyltri-L-glutamate. L-homocysteine-binding positions include 435 to 437 (IGS) and Glu488. L-methionine-binding positions include 435 to 437 (IGS) and Glu488. 5-methyltetrahydropteroyltri-L-glutamate contacts are provided by residues 519 to 520 (RC) and Trp565. Asp603 contacts L-homocysteine. Position 603 (Asp603) interacts with L-methionine. Glu609 serves as a coordination point for 5-methyltetrahydropteroyltri-L-glutamate. Zn(2+) contacts are provided by His645, Cys647, and Glu669. His698 acts as the Proton donor in catalysis. At Cys719 the chain carries S-bacillithiol cysteine disulfide. Residue Cys730 coordinates Zn(2+).

Belongs to the vitamin-B12 independent methionine synthase family. It depends on Zn(2+) as a cofactor. In response to oxidative stress, Cys-719 can react with bacillithiol (BSH) to form mixed disulfides. S-bacillithiolation leads to loss of catalytic activity and methionine auxotrophy.

The catalysed reaction is 5-methyltetrahydropteroyltri-L-glutamate + L-homocysteine = tetrahydropteroyltri-L-glutamate + L-methionine. It participates in amino-acid biosynthesis; L-methionine biosynthesis via de novo pathway; L-methionine from L-homocysteine (MetE route): step 1/1. Functionally, catalyzes the transfer of a methyl group from 5-methyltetrahydrofolate to homocysteine resulting in methionine formation. The polypeptide is 5-methyltetrahydropteroyltriglutamate--homocysteine methyltransferase (Bacillus subtilis (strain 168)).